A 599-amino-acid chain; its full sequence is Aspartate--tRNA ligase (599 aa).

L-aspartate is bound at residue Glu-180. The tract at residues 204-207 (QIFK) is aspartate. Arg-226 is a binding site for L-aspartate. ATP is bound by residues 226–228 (RDE) and Gln-235. An L-aspartate-binding site is contributed by His-454. An ATP-binding site is contributed by Glu-488. Position 495 (Arg-495) interacts with L-aspartate. Residue 540–543 (GLDR) participates in ATP binding.

This sequence belongs to the class-II aminoacyl-tRNA synthetase family. Type 1 subfamily. As to quaternary structure, homodimer.

It is found in the cytoplasm. The catalysed reaction is tRNA(Asp) + L-aspartate + ATP = L-aspartyl-tRNA(Asp) + AMP + diphosphate. Functionally, catalyzes the attachment of L-aspartate to tRNA(Asp) in a two-step reaction: L-aspartate is first activated by ATP to form Asp-AMP and then transferred to the acceptor end of tRNA(Asp). This Clostridium botulinum (strain Alaska E43 / Type E3) protein is Aspartate--tRNA ligase.